Here is a 145-residue protein sequence, read N- to C-terminus: Superoxide dismutase [Mn/Fe] (145 aa).

Fe(3+) is bound by residues H10 and H64. Mn(2+) contacts are provided by H10 and H64.

This sequence belongs to the iron/manganese superoxide dismutase family. Requires Mn(2+) as cofactor. The cofactor is Fe(3+).

It catalyses the reaction 2 superoxide + 2 H(+) = H2O2 + O2. Destroys superoxide anion radicals which are normally produced within the cells and which are toxic to biological systems. Catalyzes the dismutation of superoxide anion radicals into O2 and H2O2 by successive reduction and oxidation of the transition metal ion at the active site. The sequence is that of Superoxide dismutase [Mn/Fe] (sodA) from Streptococcus iniae (Streptococcus shiloi).